Consider the following 207-residue polypeptide: Ras-related protein Rab-7a (207 aa).

Residue T2 is modified to N-acetylthreonine. The GTP site is built by S17, G18, V19, G20, K21, T22, S23, S34, N35, Y37, and T40. T22 serves as a coordination point for Mg(2+). Positions 28 to 41 match the Switch 1 motif; that stretch reads YVNKKFSNQYKATI. The Mg(2+) site is built by T40 and D63. Residue G66 participates in GTP binding. A Switch 2 motif is present at residues 67–82; it reads QERFQSLSVAFYRGAD. S72 is subject to Phosphoserine. 5 residues coordinate GTP: N125, K126, D128, A156, and K157. Residues K191 and K194 each participate in a glycyl lysine isopeptide (Lys-Gly) (interchain with G-Cter in ubiquitin) cross-link. S-geranylgeranyl cysteine attachment occurs at residues C205 and C207. Residue C207 is modified to Cysteine methyl ester.

This sequence belongs to the small GTPase superfamily. Rab family. As to quaternary structure, interacts with NTRK1/TRKA. Interacts with RILP. Interacts with PSMA7. Interacts with RNF115. Interacts with FYCO1. Interacts with the PIK3C3/VPS34-PIK3R4 complex. The GTP-bound form interacts with OSBPL1A. The GTP-bound form interacts with RAC1. Interacts with CLN3. Interacts with CHM, the substrate-binding subunit of the Rab geranylgeranyltransferase complex. Interacts with C9orf72. Does not interact with HPS4 and the BLOC-3 complex (heterodimer of HPS1 and HPS4). Interacts with CLN5. Interacts with PLEKHM1 (via N- and C-terminus). Interacts with PRPH; the interaction is direct. Interacts with VPS13A. The GDP-bound form interacts with RIMOC1. Interacts with the MON1A-CCZ1B complex and this interaction is enhanced in the presence of RIMOC1. Interacts with VPS39 and VPS41. Forms a ternary complex with LAMP2 and RUFY4; the interaction with LAMP2 is mediated by RUFY4 (via RUN and coiled coil domains). Requires Mg(2+) as cofactor. Post-translationally, deubiquitination at Lys-191 and Lys-194 by USP32. In terms of processing, phosphorylated at Ser-72 by LRRK1; phosphorylation is dependent on protein kinase C (PKC) activation of LRRK1. Prenylated. Prenylation is required for association with cellular membranes.

It is found in the cytoplasmic vesicle. The protein localises to the phagosome membrane. Its subcellular location is the late endosome membrane. It localises to the lysosome membrane. The protein resides in the melanosome membrane. It is found in the autophagosome membrane. The protein localises to the lipid droplet. Its subcellular location is the endosome membrane. It localises to the mitochondrion membrane. It catalyses the reaction GTP + H2O = GDP + phosphate + H(+). Regulated by guanine nucleotide exchange factors (GEFs) which promote the exchange of bound GDP for free GTP. Regulated by GTPase activating proteins (GAPs) which increase the GTP hydrolysis activity. Inhibited by GDP dissociation inhibitors (GDIs). Functionally, the small GTPases Rab are key regulators of intracellular membrane trafficking, from the formation of transport vesicles to their fusion with membranes. Rabs cycle between an inactive GDP-bound form and an active GTP-bound form that is able to recruit to membranes different sets of downstream effectors directly responsible for vesicle formation, movement, tethering and fusion. In its active state, RAB7A binds to a variety of effector proteins playing a key role in the regulation of endo-lysosomal trafficking. Governs early-to-late endosomal maturation, microtubule minus-end as well as plus-end directed endosomal migration and positioning, and endosome-lysosome transport through different protein-protein interaction cascades. Also plays a central role in growth-factor-mediated cell signaling, nutrient-transporter-mediated nutrient uptake, neurotrophin transport in the axons of neurons and lipid metabolism. Also involved in regulation of some specialized endosomal membrane trafficking, such as maturation of melanosomes, pathogen-induced phagosomes (or vacuoles) and autophagosomes. Plays a role in the maturation and acidification of phagosomes that engulf pathogens, such as S.aureus and Mycobacteria. Plays a role in the fusion of phagosomes with lysosomes. In concert with RAC1, plays a role in regulating the formation of RBs (ruffled borders) in osteoclasts. Controls the endosomal trafficking and neurite outgrowth signaling of NTRK1/TRKA. Regulates the endocytic trafficking of the EGF-EGFR complex by regulating its lysosomal degradation. Involved in the ADRB2-stimulated lipolysis through lipophagy, a cytosolic lipase-independent autophagic pathway. Required for the exosomal release of SDCBP, CD63 and syndecan. Required for vesicular trafficking and cell surface expression of ACE2. May play a role in PRPH neuronal intermediate filament assembly. The sequence is that of Ras-related protein Rab-7a (RAB7A) from Oryctolagus cuniculus (Rabbit).